The primary structure comprises 130 residues: Methylglyoxal synthase (130 aa).

The region spanning 1 to 130 (MSKPRIALIA…DLARNMQDVC (130 aa)) is the MGS-like domain. Residues histidine 11, lysine 15, 37–40 (TGTT), and 57–58 (SG) contribute to the substrate site. Catalysis depends on aspartate 63, which acts as the Proton donor/acceptor. Histidine 90 serves as a coordination point for substrate.

Belongs to the methylglyoxal synthase family.

It catalyses the reaction dihydroxyacetone phosphate = methylglyoxal + phosphate. Catalyzes the formation of methylglyoxal from dihydroxyacetone phosphate. This is Methylglyoxal synthase from Burkholderia orbicola (strain AU 1054).